Here is a 303-residue protein sequence, read N- to C-terminus: Sodium/potassium-transporting ATPase subunit beta-1 (303 aa).

Over 1-34 (MPAATKDSDGGWKKFLWNSEKKEFLGRTGGSWAK) the chain is Cytoplasmic. A helical; Signal-anchor for type II membrane protein transmembrane segment spans residues 35-55 (ILLFYVIFYGCLAGIFIGTIQ). The Extracellular portion of the chain corresponds to 56-303 (ALLLTINDFK…FDVKFTINES (248 aa)). N-linked (GlcNAc...) asparagine glycosylation is present at Asn-113. 2 cysteine pairs are disulfide-bonded: Cys-126–Cys-149 and Cys-159–Cys-175. N-linked (GlcNAc...) asparagine glycans are attached at residues Asn-194 and Asn-264. Cys-214 and Cys-275 form a disulfide bridge.

The protein belongs to the X(+)/potassium ATPases subunit beta family. The sodium/potassium-transporting ATPase is composed of a catalytic alpha subunit, an auxiliary non-catalytic beta subunit and an additional regulatory subunit. As to expression, detected in all tissues except liver and cardiac muscle. Highest levels found in intestine, ovary and kidney with marginally lower levels in brain, spleen, esophagus, eye and pancreas, intermediate levels in gill and low levels in white and red skeletal muscle.

Its subcellular location is the cell membrane. Its function is as follows. This is the non-catalytic component of the active enzyme, which catalyzes the hydrolysis of ATP coupled with the exchange of Na(+) and K(+) ions across the plasma membrane. The beta subunit regulates, through assembly of alpha/beta heterodimers, the number of sodium pumps transported to the plasma membrane. The protein is Sodium/potassium-transporting ATPase subunit beta-1 (atp1b1) of Anguilla anguilla (European freshwater eel).